A 152-amino-acid polypeptide reads, in one-letter code: Large ribosomal subunit protein bL9 (152 aa).

Belongs to the bacterial ribosomal protein bL9 family.

In terms of biological role, binds to the 23S rRNA. The chain is Large ribosomal subunit protein bL9 from Mycobacterium sp. (strain JLS).